Reading from the N-terminus, the 429-residue chain is Adenylosuccinate synthetase (429 aa).

Residues 12–18 and 40–42 contribute to the GTP site; these read GDEGKGK and GHT. The active-site Proton acceptor is D13. Positions 13 and 40 each coordinate Mg(2+). IMP-binding positions include 13-16, 38-41, T129, R143, Q223, T238, and R302; these read DEGK and NAGH. H41 acts as the Proton donor in catalysis. 298-304 contacts substrate; sequence VVTGRKR. GTP-binding positions include R304, 330 to 332, and 412 to 414; these read KLD and STS.

The protein belongs to the adenylosuccinate synthetase family. Homodimer. Requires Mg(2+) as cofactor.

The protein resides in the cytoplasm. It carries out the reaction IMP + L-aspartate + GTP = N(6)-(1,2-dicarboxyethyl)-AMP + GDP + phosphate + 2 H(+). It participates in purine metabolism; AMP biosynthesis via de novo pathway; AMP from IMP: step 1/2. Its function is as follows. Plays an important role in the de novo pathway of purine nucleotide biosynthesis. Catalyzes the first committed step in the biosynthesis of AMP from IMP. The chain is Adenylosuccinate synthetase from Brucella ovis (strain ATCC 25840 / 63/290 / NCTC 10512).